The following is a 304-amino-acid chain: MIKQRTIKQSVQETGIGLHKGDKVTMTLRPAPANTGIVFRRVDLEPHADIPARAEAVGDTMLCTCITNADGVSISTVEHLASALAGLGIDNIIVEVDSDELPIMDGSASPFIFLLQSVGIEELNAPKQFIKIKKAIKVKDGDKWAELRPHDGFRVDFRIDFDHPAISQTRQHMVLDFDSSSYVDEVSRARTFGFMKDLEYMNANNLALGGSMANAVALDEYRVLNPEGLRYSDEFLKHKILDAIGDLYLGGHSIIGELVAYKTGHGLNNKLLNALLQNQACWEFVSYDNSEELPIRFASPILAN.

Residues H79, H238, and D242 each contribute to the Zn(2+) site. The active-site Proton donor is the H265.

The protein belongs to the LpxC family. It depends on Zn(2+) as a cofactor.

The enzyme catalyses a UDP-3-O-[(3R)-3-hydroxyacyl]-N-acetyl-alpha-D-glucosamine + H2O = a UDP-3-O-[(3R)-3-hydroxyacyl]-alpha-D-glucosamine + acetate. It participates in glycolipid biosynthesis; lipid IV(A) biosynthesis; lipid IV(A) from (3R)-3-hydroxytetradecanoyl-[acyl-carrier-protein] and UDP-N-acetyl-alpha-D-glucosamine: step 2/6. In terms of biological role, catalyzes the hydrolysis of UDP-3-O-myristoyl-N-acetylglucosamine to form UDP-3-O-myristoylglucosamine and acetate, the committed step in lipid A biosynthesis. The polypeptide is UDP-3-O-acyl-N-acetylglucosamine deacetylase (Pseudoalteromonas atlantica (strain T6c / ATCC BAA-1087)).